Reading from the N-terminus, the 568-residue chain is Probable pectinesterase/pectinesterase inhibitor 23 (568 aa).

Positions 1 to 33 (MGSDGDKKKKFIVAGSVSGFLVIMVVSVAVVTS) are cleaved as a signal peptide. Residues 45-198 (RKTTKAVQAV…RELSSNSLAM (154 aa)) form a pectinesterase inhibitor 23 region. 3 N-linked (GlcNAc...) asparagine glycosylation sites follow: Asn-94, Asn-210, and Asn-316. Positions 251–548 (PGPVKANAVV…PQDALLYTGD (298 aa)) are pectinesterase 23. Substrate contacts are provided by Thr-333 and Gln-363. The active-site Proton donor; for pectinesterase activity is the Asp-386. Cysteines 400 and 420 form a disulfide. The active-site Nucleophile; for pectinesterase activity is the Asp-407. Arg-475 and Trp-477 together coordinate substrate.

In the N-terminal section; belongs to the PMEI family. This sequence in the C-terminal section; belongs to the pectinesterase family. In terms of tissue distribution, expressed in mature pollen grains in the anthers and on the stigma. Found in pollen tubes within the style.

The protein localises to the secreted. It is found in the cell wall. The enzyme catalyses [(1-&gt;4)-alpha-D-galacturonosyl methyl ester](n) + n H2O = [(1-&gt;4)-alpha-D-galacturonosyl](n) + n methanol + n H(+). The protein operates within glycan metabolism; pectin degradation; 2-dehydro-3-deoxy-D-gluconate from pectin: step 1/5. In terms of biological role, acts in the modification of cell walls via demethylesterification of cell wall pectin. This chain is Probable pectinesterase/pectinesterase inhibitor 23 (PME23), found in Arabidopsis thaliana (Mouse-ear cress).